Here is a 371-residue protein sequence, read N- to C-terminus: Phosphate acyltransferase (371 aa).

It belongs to the PlsX family. As to quaternary structure, homodimer. Probably interacts with PlsY.

The protein resides in the cytoplasm. It carries out the reaction a fatty acyl-[ACP] + phosphate = an acyl phosphate + holo-[ACP]. It participates in lipid metabolism; phospholipid metabolism. Catalyzes the reversible formation of acyl-phosphate (acyl-PO(4)) from acyl-[acyl-carrier-protein] (acyl-ACP). This enzyme utilizes acyl-ACP as fatty acyl donor, but not acyl-CoA. The chain is Phosphate acyltransferase from Ruegeria pomeroyi (strain ATCC 700808 / DSM 15171 / DSS-3) (Silicibacter pomeroyi).